We begin with the raw amino-acid sequence, 452 residues long: Phosphoglucosamine mutase (452 aa).

Serine 98 functions as the Phosphoserine intermediate in the catalytic mechanism. The Mg(2+) site is built by serine 98, aspartate 239, aspartate 241, and aspartate 243. Residue serine 98 is modified to Phosphoserine.

The protein belongs to the phosphohexose mutase family. Mg(2+) is required as a cofactor. In terms of processing, activated by phosphorylation.

The enzyme catalyses alpha-D-glucosamine 1-phosphate = D-glucosamine 6-phosphate. Catalyzes the conversion of glucosamine-6-phosphate to glucosamine-1-phosphate. This Anaplasma marginale (strain St. Maries) protein is Phosphoglucosamine mutase.